The following is a 293-amino-acid chain: 4-hydroxy-tetrahydrodipicolinate synthase (293 aa).

T45 lines the pyruvate pocket. Y133 serves as the catalytic Proton donor/acceptor. K161 functions as the Schiff-base intermediate with substrate in the catalytic mechanism. A pyruvate-binding site is contributed by I204.

Belongs to the DapA family. Homotetramer; dimer of dimers.

The protein localises to the cytoplasm. It carries out the reaction L-aspartate 4-semialdehyde + pyruvate = (2S,4S)-4-hydroxy-2,3,4,5-tetrahydrodipicolinate + H2O + H(+). It functions in the pathway amino-acid biosynthesis; L-lysine biosynthesis via DAP pathway; (S)-tetrahydrodipicolinate from L-aspartate: step 3/4. Catalyzes the condensation of (S)-aspartate-beta-semialdehyde [(S)-ASA] and pyruvate to 4-hydroxy-tetrahydrodipicolinate (HTPA). The protein is 4-hydroxy-tetrahydrodipicolinate synthase of Yersinia pseudotuberculosis serotype O:1b (strain IP 31758).